We begin with the raw amino-acid sequence, 314 residues long: DNA-directed RNA polymerase subunit alpha (314 aa).

The alpha N-terminal domain (alpha-NTD) stretch occupies residues 1-228; sequence MIEFEKPKIH…EHLAIFVNLN (228 aa). The interval 245-314 is alpha C-terminal domain (alpha-CTD); sequence KEKMLEMTIE…LLGLGFRSED (70 aa).

Belongs to the RNA polymerase alpha chain family. As to quaternary structure, homodimer. The RNAP catalytic core consists of 2 alpha, 1 beta, 1 beta' and 1 omega subunit. When a sigma factor is associated with the core the holoenzyme is formed, which can initiate transcription.

It catalyses the reaction RNA(n) + a ribonucleoside 5'-triphosphate = RNA(n+1) + diphosphate. DNA-dependent RNA polymerase catalyzes the transcription of DNA into RNA using the four ribonucleoside triphosphates as substrates. The chain is DNA-directed RNA polymerase subunit alpha from Pediococcus pentosaceus (strain ATCC 25745 / CCUG 21536 / LMG 10740 / 183-1w).